The sequence spans 160 residues: Nucleotide-binding protein Patl_4311 (160 aa).

Belongs to the YajQ family.

Functionally, nucleotide-binding protein. The polypeptide is Nucleotide-binding protein Patl_4311 (Pseudoalteromonas atlantica (strain T6c / ATCC BAA-1087)).